The primary structure comprises 138 residues: Large-conductance mechanosensitive channel (138 aa).

The next 3 membrane-spanning stretches (helical) occupy residues Val-15–Val-35, Ile-38–Gln-58, and Gly-80–Val-100.

Belongs to the MscL family. In terms of assembly, homopentamer.

The protein resides in the cell inner membrane. Its function is as follows. Channel that opens in response to stretch forces in the membrane lipid bilayer. May participate in the regulation of osmotic pressure changes within the cell. This Brucella canis (strain ATCC 23365 / NCTC 10854 / RM-666) protein is Large-conductance mechanosensitive channel.